The primary structure comprises 827 residues: Periplasmic nitrate reductase (827 aa).

Residues 1 to 33 (MNLSRRDFMKANAAMAAATAAGLTIPVKNVVAA) constitute a signal peptide (tat-type signal). Residues 37–93 (IKWDKGVCRFCGTGCAVLVGTKDGRVVASQGDPDAEVNRGLNCIKGYFLPKIMYGKD) enclose the 4Fe-4S Mo/W bis-MGD-type domain. The [4Fe-4S] cluster site is built by Cys-44, Cys-47, Cys-51, and Cys-79. Mo-bis(molybdopterin guanine dinucleotide)-binding positions include Lys-81, Gln-148, Asn-173, Cys-177, 210-217 (WGSNMAEM), 241-245 (STYEH), 260-262 (QTD), Met-370, Gln-374, Asn-480, 506-507 (SD), Lys-529, Asp-556, and 716-725 (TGRVLEHWHT). A substrate-binding site is contributed by Phe-792. Mo-bis(molybdopterin guanine dinucleotide) contacts are provided by Asn-800 and Lys-817.

Belongs to the prokaryotic molybdopterin-containing oxidoreductase family. NasA/NapA/NarB subfamily. Component of the periplasmic nitrate reductase NapAB complex composed of NapA and NapB. [4Fe-4S] cluster serves as cofactor. Requires Mo-bis(molybdopterin guanine dinucleotide) as cofactor. In terms of processing, predicted to be exported by the Tat system. The position of the signal peptide cleavage has not been experimentally proven.

The protein localises to the periplasm. The enzyme catalyses 2 Fe(II)-[cytochrome] + nitrate + 2 H(+) = 2 Fe(III)-[cytochrome] + nitrite + H2O. Functionally, catalytic subunit of the periplasmic nitrate reductase complex NapAB. Receives electrons from NapB and catalyzes the reduction of nitrate to nitrite. The protein is Periplasmic nitrate reductase of Haemophilus influenzae (strain PittEE).